A 169-amino-acid chain; its full sequence is Endoribonuclease YbeY (169 aa).

Zn(2+) contacts are provided by H130, H134, and H140.

Belongs to the endoribonuclease YbeY family. Requires Zn(2+) as cofactor.

Its subcellular location is the cytoplasm. In terms of biological role, single strand-specific metallo-endoribonuclease involved in late-stage 70S ribosome quality control and in maturation of the 3' terminus of the 16S rRNA. In Neisseria meningitidis serogroup B (strain ATCC BAA-335 / MC58), this protein is Endoribonuclease YbeY.